A 243-amino-acid chain; its full sequence is 1-(5-phosphoribosyl)-5-[(5-phosphoribosylamino)methylideneamino] imidazole-4-carboxamide isomerase (243 aa).

Asp8 (proton acceptor) is an active-site residue. Residue Asp129 is the Proton donor of the active site.

The protein belongs to the HisA/HisF family.

It is found in the cytoplasm. It catalyses the reaction 1-(5-phospho-beta-D-ribosyl)-5-[(5-phospho-beta-D-ribosylamino)methylideneamino]imidazole-4-carboxamide = 5-[(5-phospho-1-deoxy-D-ribulos-1-ylimino)methylamino]-1-(5-phospho-beta-D-ribosyl)imidazole-4-carboxamide. Its pathway is amino-acid biosynthesis; L-histidine biosynthesis; L-histidine from 5-phospho-alpha-D-ribose 1-diphosphate: step 4/9. In Moorella thermoacetica (strain ATCC 39073 / JCM 9320), this protein is 1-(5-phosphoribosyl)-5-[(5-phosphoribosylamino)methylideneamino] imidazole-4-carboxamide isomerase.